The chain runs to 2507 residues: Putative neurobeachin homolog (2507 aa).

Disordered regions lie at residues 1–109, 1307–1377, and 1629–1649; these read MEIS…PPLP, PSSP…DGGR, and SRHEEANLPEGEKNEEPEISE. The span at 24 to 37 shows a compositional bias: acidic residues; it reads PVEEGEEVNDEESN. Polar residues predominate over residues 1317 to 1340; sequence TTQKQENSENVNSETSPENGSNGK. Over residues 1360 to 1372 the composition is skewed to acidic residues; that stretch reads DGEEEENGEEGQG. The 109-residue stretch at 1690–1798 folds into the BEACH-type PH domain; the sequence is PSSQSACFST…AVKKVVYQLP (109 aa). Residues 1817–2106 form the BEACH domain; that stretch reads MTPRQLFKHS…QLLTEAHPPR (290 aa). WD repeat units follow at residues 2265–2308, 2326–2365, 2405–2444, and 2447–2486; these read GHGD…GFIA, GHEASISALCVSAEHGLVVSGCEDGVILIHTTSSDLLRRI, LVDDKIECVTVTRDGEFAVTGAVNGRINIWRMFPLTKLYT, and PLNSAVRSVAVVASHRFILGGLDSGAIVVFNADFNRWHYE.

The protein belongs to the WD repeat neurobeachin family. Interacts with RII subunit of PKA. Expressed in vulval precursor cells and rectal epithelia in L2 and L3 larvae. In L4 larvae, expression is seen in intestinal epithelial cells.

The protein localises to the cytoplasm. It localises to the membrane. The protein resides in the nucleus. Functionally, binds to type II regulatory subunits of protein kinase A and anchors/targets them to the membrane. May anchor the kinase to cytoskeletal and/or organelle-associated proteins. Regulates endosomal traffic in polarized epithelial cells such as the vulval precursor cells and intestinal cells. Thought to act as a negative regulator of lin-12 activity in vulval precursor cells. May have a role in the internalization process from basolateral surface of polarized epithelial cells. The sequence is that of Putative neurobeachin homolog (sel-2) from Caenorhabditis elegans.